Reading from the N-terminus, the 684-residue chain is Threonine--tRNA ligase (684 aa).

A TGS domain is found at 1–66 (MTAVASSAPA…DTDVEVTPVA (66 aa)). The catalytic stretch occupies residues 261–567 (DHRKLGVELD…LTEHYAGAFP (307 aa)). Residues Cys366, His417, and His544 each coordinate Zn(2+).

Belongs to the class-II aminoacyl-tRNA synthetase family. In terms of assembly, homodimer. Zn(2+) is required as a cofactor.

The protein localises to the cytoplasm. It catalyses the reaction tRNA(Thr) + L-threonine + ATP = L-threonyl-tRNA(Thr) + AMP + diphosphate + H(+). Catalyzes the attachment of threonine to tRNA(Thr) in a two-step reaction: L-threonine is first activated by ATP to form Thr-AMP and then transferred to the acceptor end of tRNA(Thr). Also edits incorrectly charged L-seryl-tRNA(Thr). The sequence is that of Threonine--tRNA ligase from Mycolicibacterium smegmatis (strain ATCC 700084 / mc(2)155) (Mycobacterium smegmatis).